Reading from the N-terminus, the 269-residue chain is Hydroxyethylthiazole kinase (269 aa).

M42 contributes to the substrate binding site. ATP is bound by residues R118 and S164. Residue G191 participates in substrate binding.

This sequence belongs to the Thz kinase family. Mg(2+) is required as a cofactor.

It catalyses the reaction 5-(2-hydroxyethyl)-4-methylthiazole + ATP = 4-methyl-5-(2-phosphooxyethyl)-thiazole + ADP + H(+). Its pathway is cofactor biosynthesis; thiamine diphosphate biosynthesis; 4-methyl-5-(2-phosphoethyl)-thiazole from 5-(2-hydroxyethyl)-4-methylthiazole: step 1/1. Catalyzes the phosphorylation of the hydroxyl group of 4-methyl-5-beta-hydroxyethylthiazole (THZ). The protein is Hydroxyethylthiazole kinase of Listeria monocytogenes serotype 4a (strain HCC23).